A 217-amino-acid chain; its full sequence is 3,4-dihydroxy-2-butanone 4-phosphate synthase (217 aa).

D-ribulose 5-phosphate-binding positions include 37–38 (RE), Asp42, 150–154 (RGGHT), and Glu174. Residue Glu38 participates in Mg(2+) binding. His153 lines the Mg(2+) pocket.

The protein belongs to the DHBP synthase family. Homodimer. Requires Mg(2+) as cofactor. It depends on Mn(2+) as a cofactor.

The enzyme catalyses D-ribulose 5-phosphate = (2S)-2-hydroxy-3-oxobutyl phosphate + formate + H(+). Its pathway is cofactor biosynthesis; riboflavin biosynthesis; 2-hydroxy-3-oxobutyl phosphate from D-ribulose 5-phosphate: step 1/1. Functionally, catalyzes the conversion of D-ribulose 5-phosphate to formate and 3,4-dihydroxy-2-butanone 4-phosphate. The protein is 3,4-dihydroxy-2-butanone 4-phosphate synthase of Escherichia coli O127:H6 (strain E2348/69 / EPEC).